The primary structure comprises 236 residues: MAKLDAQSIINYIGSAKKKTPVKVYVKGALDQLNVPAGIKTFFSGNAGVLFGDWADVEPFLKANAANIEDYELENDARNSAVPMADLKQYNARIEPGAIIRDQVLIGDNAVIMMGAVINIGAEIGEGSMIDMGAILGGRAIVGKNCHIGAGTVLAGVVEPPSAKPVQIDDDVLIGANAAVLEGVHVGKGAVVAAGAIVIEDVAPNTVVGGVPARKLKDIDDKTKSKTELMAELRNL.

This sequence belongs to the transferase hexapeptide repeat family. DapH subfamily.

It carries out the reaction (S)-2,3,4,5-tetrahydrodipicolinate + acetyl-CoA + H2O = L-2-acetamido-6-oxoheptanedioate + CoA. It functions in the pathway amino-acid biosynthesis; L-lysine biosynthesis via DAP pathway; LL-2,6-diaminopimelate from (S)-tetrahydrodipicolinate (acetylase route): step 1/3. Functionally, catalyzes the transfer of an acetyl group from acetyl-CoA to tetrahydrodipicolinate. The sequence is that of 2,3,4,5-tetrahydropyridine-2,6-dicarboxylate N-acetyltransferase from Lactiplantibacillus plantarum (strain ATCC BAA-793 / NCIMB 8826 / WCFS1) (Lactobacillus plantarum).